The chain runs to 323 residues: Aquaporin-4 (323 aa).

At 1–36 (MSDGAAARRWGKCGHSCSRESIMVAFKGVWTQAFWK) the chain is on the cytoplasmic side. 2 S-palmitoyl cysteine lipidation sites follow: Cys-13 and Cys-17. The chain crosses the membrane as a helical span at residues 37–57 (AVSAEFLATLIFVLLGVGSTI). The Extracellular segment spans residues 58-69 (NWGGSENPLPVD). The chain crosses the membrane as a helical span at residues 70–89 (MVLISLCFGLSIATMVQCFG). The Cytoplasmic segment spans residues 90-93 (HISG). Positions 94–101 (GHINPAVT) form an intramembrane region, discontinuously helical. The short motif at 97–99 (NPA) is the NPA 1 element. Over 102-115 (VAMVCTRKISIAKS) the chain is Cytoplasmic. Ser-111 is subject to Phosphoserine; by PKG. A helical transmembrane segment spans residues 116 to 136 (VFYIIAQCLGAIIGAGILYLV). Residues 137–155 (TPPSVVGGLGVTTVHGNLT) lie on the Extracellular side of the membrane. The N-linked (GlcNAc...) asparagine glycan is linked to Asn-153. A helical membrane pass occupies residues 156 to 176 (AGHGLLVELIITFQLVFTIFA). The Cytoplasmic portion of the chain corresponds to 177–184 (SCDSKRTD). Phosphoserine; by PKC is present on Ser-180. A helical membrane pass occupies residues 185–205 (VTGSIALAIGFSVAIGHLFAI). N-linked (GlcNAc...) asparagine glycosylation is present at Asn-206. The Extracellular portion of the chain corresponds to 206-208 (NYT). Residues 209 to 222 (GASMNPARSFGPAV) constitute an intramembrane region (discontinuously helical). The NPA 2 signature appears at 213–215 (NPA). Over 223-231 (IMGNWANHW) the chain is Extracellular. The helical transmembrane segment at 232 to 252 (IYWVGPIMGAVLAGALYEYVF) threads the bilayer. Over 253 to 323 (CPDVELKRRL…DSSGEVLSSV (71 aa)) the chain is Cytoplasmic. Phosphoserine occurs at positions 276 and 285. A Phosphothreonine modification is found at Thr-289. Phosphoserine is present on Ser-321.

This sequence belongs to the MIP/aquaporin (TC 1.A.8) family. Homotetramer. The tetramers can form oligomeric arrays in membranes. The size of the oligomers differs between tissues and is smaller in skeletal muscle than in brain. Interaction between AQP4 oligomeric arrays in close-by cells can contribute to cell-cell adhesion. Part of a complex containing MLC1, TRPV4, HEPACAM and ATP1B1. In terms of processing, phosphorylation by PKC at Ser-180 reduces conductance by 50%. Phosphorylation by PKG at Ser-111 in response to glutamate increases conductance by 40%; this increase is not due to increased presence at the cell membrane. Isoform 2: Palmitoylated on its N-terminal region. Isoform 1: Not palmitoylated. As to expression, detected in brain cortex, especially around cortical blood vessels, and subjacent to pia, with lower levels in parenchymal membranes. Detected in ependymal and astroglial cells in brain. Detected in supporting Hensen's cells, inner sulcus cells and Claudius cells in the inner ear. Detected in skeletal muscle. Detected in gastric parietal cells. Detected in principal cells in collecting ducts in kidney medulla (at protein level). Detected in brain, heart and skeletal muscle.

Its subcellular location is the cell membrane. The protein resides in the basolateral cell membrane. The protein localises to the endosome membrane. It is found in the sarcolemma. It localises to the cell projection. It carries out the reaction H2O(in) = H2O(out). Forms a water-specific channel. Plays an important role in brain water homeostasis and in glymphatic solute transport. Required for a normal rate of water exchange across the blood brain interface. Required for normal levels of cerebrospinal fluid influx into the brain cortex and parenchyma along paravascular spaces that surround penetrating arteries, and for normal drainage of interstitial fluid along paravenous drainage pathways. Thereby, it is required for normal clearance of solutes from the brain interstitial fluid, including soluble beta-amyloid peptides derived from APP. Plays a redundant role in urinary water homeostasis and urinary concentrating ability. In Mus musculus (Mouse), this protein is Aquaporin-4 (Aqp4).